The following is a 151-amino-acid chain: Small ribosomal subunit protein uS15y (151 aa).

The protein belongs to the universal ribosomal protein uS15 family.

The polypeptide is Small ribosomal subunit protein uS15y (Oryza sativa subsp. japonica (Rice)).